Reading from the N-terminus, the 424-residue chain is UPF0229 protein PputGB1_0427 (424 aa).

The segment at E81–S107 is disordered. Gly residues predominate over residues Q92–S107.

The protein belongs to the UPF0229 family.

The protein is UPF0229 protein PputGB1_0427 of Pseudomonas putida (strain GB-1).